The chain runs to 304 residues: Acetyl-coenzyme A carboxylase carboxyl transferase subunit beta (304 aa).

Residues 26–295 (VWTKCTSCEQ…PFVEPELVEN (270 aa)) enclose the CoA carboxyltransferase N-terminal domain. Residues Cys-30, Cys-33, Cys-49, and Cys-52 each contribute to the Zn(2+) site. Residues 30-52 (CTSCEQVLYRDELRRHLEVCPKC) form a C4-type zinc finger. The segment at 281–304 (SNKPSPFVEPELVENEEQSKSDNE) is disordered.

The protein belongs to the AccD/PCCB family. As to quaternary structure, acetyl-CoA carboxylase is a heterohexamer composed of biotin carboxyl carrier protein (AccB), biotin carboxylase (AccC) and two subunits each of ACCase subunit alpha (AccA) and ACCase subunit beta (AccD). It depends on Zn(2+) as a cofactor.

It localises to the cytoplasm. It carries out the reaction N(6)-carboxybiotinyl-L-lysyl-[protein] + acetyl-CoA = N(6)-biotinyl-L-lysyl-[protein] + malonyl-CoA. The protein operates within lipid metabolism; malonyl-CoA biosynthesis; malonyl-CoA from acetyl-CoA: step 1/1. Component of the acetyl coenzyme A carboxylase (ACC) complex. Biotin carboxylase (BC) catalyzes the carboxylation of biotin on its carrier protein (BCCP) and then the CO(2) group is transferred by the transcarboxylase to acetyl-CoA to form malonyl-CoA. The chain is Acetyl-coenzyme A carboxylase carboxyl transferase subunit beta from Pasteurella multocida (strain Pm70).